A 610-amino-acid polypeptide reads, in one-letter code: C4b-binding protein alpha chain (610 aa).

A signal peptide spans 1–48 (MKHQRVPVMILHSKGTMASWPFSRLWSISDPILFQVTLVATLLATVLG). 8 Sushi domains span residues 49–109 (SCGI…FCVK), 110–171 (KRCE…QCII), 172–236 (AKCE…SCKK), 237–296 (VICV…TCEL), 297–364 (NGCL…ECKE), 365–427 (VCCP…ECRP), 428–485 (DCKS…QCKA), and 486–543 (LCLK…KCEW). 16 disulfide bridges follow: Cys50–Cys95, Cys80–Cys107, Cys112–Cys153, Cys139–Cys169, Cys174–Cys217, Cys203–Cys234, Cys239–Cys281, Cys267–Cys294, Cys299–Cys350, Cys334–Cys362, Cys367–Cys412, Cys402–Cys425, Cys429–Cys471, Cys457–Cys483, Cys487–Cys528, and Cys514–Cys541. Asn66 carries N-linked (GlcNAc...) asparagine glycosylation. The N-linked (GlcNAc...) asparagine glycan is linked to Asn221. Residues Asn525 and Asn602 are each glycosylated (N-linked (GlcNAc...) asparagine).

In terms of assembly, disulfide-linked complex of alpha and beta chains.

The protein resides in the secreted. In terms of biological role, controls the classical pathway of complement activation. It binds as a cofactor to C3b/C4b inactivator (C3bINA), which then hydrolyzes the complement fragment C4b. It also accelerates the degradation of the C4bC2a complex (C3 convertase) by dissociating the complement fragment C2a. Alpha chain binds C4b. It also interacts with serum amyloid P component. This Bos taurus (Bovine) protein is C4b-binding protein alpha chain (C4BPA).